Reading from the N-terminus, the 309-residue chain is Putative G-protein coupled receptor B0244.4 (309 aa).

A run of 6 helical transmembrane segments spans residues 39-59, 82-102, 114-134, 162-182, 204-224, and 256-276; these read SIIFWIDFLIPCTLFVVACFL, YIFMVSRAISALTACVIMLAL, IYFLFFLIDDLSFYSLLGSYV, FAIANLITSVVLAITTAMFQA, IMLVLILTSFLIPIVTLSFVL, and WTLFTFTLITLTEAIPSFYLV.

Belongs to the G-protein coupled receptor 1 family. B0244 subfamily.

It is found in the cell membrane. The chain is Putative G-protein coupled receptor B0244.4 from Caenorhabditis elegans.